The following is a 560-amino-acid chain: NAD-dependent malic enzyme (560 aa).

Catalysis depends on Tyr100, which acts as the Proton donor. Arg153 provides a ligand contact to NAD(+). The Proton acceptor role is filled by Lys171. 3 residues coordinate a divalent metal cation: Glu242, Asp243, and Asp266. Residues Asp266 and Asn413 each coordinate NAD(+).

Belongs to the malic enzymes family. As to quaternary structure, homotetramer. It depends on Mg(2+) as a cofactor. Mn(2+) is required as a cofactor.

The catalysed reaction is (S)-malate + NAD(+) = pyruvate + CO2 + NADH. It carries out the reaction oxaloacetate + H(+) = pyruvate + CO2. The sequence is that of NAD-dependent malic enzyme from Psychrobacter arcticus (strain DSM 17307 / VKM B-2377 / 273-4).